Reading from the N-terminus, the 478-residue chain is PRAME family member 26 (478 aa).

The LRR 1; degenerate repeat unit spans residues 99–126; it reads RWKLQVLDLQDVCENFWMVWSEAMARGC. One copy of the LRR 2; degenerate repeat lies at 181–205; the sequence is HLCCKKLKILGMPFRNIRSILKMVN. The LRR 3; degenerate repeat unit spans residues 206–232; that stretch reads LDCIQEVEVNCKWVLPILTQFTPYLGH. The LRR 4; degenerate repeat unit spans residues 233–268; that stretch reads MRNLQKLVLSHMDVSRYVSPEQKKEIVTQFTTQFLK. 5 LRR repeats span residues 269-294, 295-326, 327-347, 351-378, and 379-403; these read LHCL…LSCL, KTSL…SQLK, TLDL…QILL, AATL…ALSR, and CFEL…LLSH.

Belongs to the PRAME family.

The sequence is that of PRAME family member 26 from Homo sapiens (Human).